Consider the following 433-residue polypeptide: Type I acyl-CoA thioesterase mpaH' (433 aa).

The abhydrolase domain stretch occupies residues 58 to 246 (HGVGLPKELY…IKALFGTTAD (189 aa)). Val-60 serves as a coordination point for substrate. Catalysis depends on Ser-139, which acts as the Nucleophile. Phe-140 serves as a coordination point for substrate. Active-site residues include Asp-163 and His-365.

It belongs to the AB hydrolase superfamily. MpaH hydrolase family. As to quaternary structure, homodimer.

It is found in the peroxisome matrix. It catalyses the reaction mycophenolyl-CoA + H2O = mycophenolate + CoA + H(+). The protein operates within secondary metabolite biosynthesis; terpenoid biosynthesis. Functionally, type I acyl-CoA thioesterase; part of the gene cluster that mediates the biosynthesis of mycophenolic acid (MPA), the first isolated antibiotic natural product in the world obtained from a culture of Penicillium brevicompactum in 1893. MpaH' acts as a peroxisomal acyl-CoA hydrolase that converts MPA-CoA into the final product MPA. The first step of the pathway is the synthesis of 5-methylorsellinic acid (5MOA) by the cytosolic polyketide synthase mpaC. 5MOA is then converted to the phthalide compound 5,7-dihydroxy-4,6-dimethylphthalide (DHMP) by the endoplasmic reticulum-bound cytochrome P450 monooxygenase mpaDE. MpaDE first catalyzes hydroxylation of 5-MOA to 4,6-dihydroxy-2-(hydroxymethyl)-3-methylbenzoic acid (DHMB). MpaDE then acts as a lactone synthase that catalyzes the ring closure to convert DHMB into DHMP. The next step is the prenylation of DHMP by the Golgi apparatus-associated prenyltransferase mpaA to yield farnesyl-DHMP (FDHMP). The ER-bound oxygenase mpaB then mediates the oxidative cleavage the C19-C20 double bond in FDHMP to yield FDHMP-3C via a mycophenolic aldehyde intermediate. The O-methyltransferase mpaG catalyzes the methylation of FDHMP-3C to yield MFDHMP-3C. After the cytosolic methylation of FDHMP-3C, MFDHMP-3C enters into peroxisomes probably via free diffusion due to its low molecular weight. Upon a peroxisomal CoA ligation reaction, catalyzed by a beta-oxidation component enzyme acyl-CoA ligase ACL891, MFDHMP-3C-CoA would then be restricted to peroxisomes for the following beta-oxidation pathway steps. The peroxisomal beta-oxidation machinery than converts MFDHMP-3C-CoA into MPA_CoA, via a beta-oxidation chain-shortening process. Finally mpaH acts as a peroxisomal acyl-CoA hydrolase with high substrate specificity toward MPA-CoA to release the final product MPA. This Penicillium brevicompactum protein is Type I acyl-CoA thioesterase mpaH'.